The primary structure comprises 509 residues: Glutamate--tRNA ligase (509 aa).

The 'HIGH' region motif lies at 20 to 30 (PSPTGFPHVGT). Cysteine 117, cysteine 119, cysteine 144, and histidine 146 together coordinate Zn(2+). The 'KMSKS' region signature appears at 261 to 265 (KLSKR). Lysine 264 lines the ATP pocket.

It belongs to the class-I aminoacyl-tRNA synthetase family. Glutamate--tRNA ligase type 1 subfamily. As to quaternary structure, monomer. Zn(2+) is required as a cofactor.

It localises to the cytoplasm. The catalysed reaction is tRNA(Glu) + L-glutamate + ATP = L-glutamyl-tRNA(Glu) + AMP + diphosphate. Catalyzes the attachment of glutamate to tRNA(Glu) in a two-step reaction: glutamate is first activated by ATP to form Glu-AMP and then transferred to the acceptor end of tRNA(Glu). In Psychrobacter cryohalolentis (strain ATCC BAA-1226 / DSM 17306 / VKM B-2378 / K5), this protein is Glutamate--tRNA ligase.